A 186-amino-acid chain; its full sequence is GTP-dependent dephospho-CoA kinase (186 aa).

Asp43, Ile44, Val45, Asp62, Glu120, and Asp143 together coordinate GTP.

The protein belongs to the GTP-dependent DPCK family.

It carries out the reaction 3'-dephospho-CoA + GTP = GDP + CoA + H(+). It functions in the pathway cofactor biosynthesis; coenzyme A biosynthesis. In terms of biological role, catalyzes the GTP-dependent phosphorylation of the 3'-hydroxyl group of dephosphocoenzyme A to form coenzyme A (CoA). The chain is GTP-dependent dephospho-CoA kinase from Haloquadratum walsbyi (strain DSM 16790 / HBSQ001).